Here is a 332-residue protein sequence, read N- to C-terminus: MLQVSVIGTGSWGTALANVLSENQHDVLMWGKTQTTVNEINTHHTNAKYLKDTQLHHALKATSNIQQAVLHAKIIIIAVPTKAIRSVMQQINEVANEKKVFIHVSKGIEPTTFKRISEMITEEMDPEKFQGVGVLSGPSHAEELALKHPTTVAVASDDKQIRQIAQDIFMNSYFRIYTNDDLIGVEIGGALKNIIALAAGITDGLGYGDNAKAALMTRGLAEITRLGTKMGADPLTFLGLAGIGDLIVTCTSVHSRNWKCGNMLGKGASLDEALAQMGMVVEGVRTTQAANEMAQAFGVEMPITQSLYKLLFEGLDVNEGVKNLMNREKTNE.

NADPH is bound by residues serine 11, tryptophan 12, lysine 32, and lysine 106. Sn-glycerol 3-phosphate-binding residues include lysine 106, glycine 137, and serine 139. Alanine 141 provides a ligand contact to NADPH. The sn-glycerol 3-phosphate site is built by lysine 192, aspartate 245, serine 255, arginine 256, and asparagine 257. The Proton acceptor role is filled by lysine 192. Arginine 256 contributes to the NADPH binding site. Positions 280 and 282 each coordinate NADPH.

It belongs to the NAD-dependent glycerol-3-phosphate dehydrogenase family.

The protein resides in the cytoplasm. The enzyme catalyses sn-glycerol 3-phosphate + NAD(+) = dihydroxyacetone phosphate + NADH + H(+). It catalyses the reaction sn-glycerol 3-phosphate + NADP(+) = dihydroxyacetone phosphate + NADPH + H(+). It participates in membrane lipid metabolism; glycerophospholipid metabolism. Functionally, catalyzes the reduction of the glycolytic intermediate dihydroxyacetone phosphate (DHAP) to sn-glycerol 3-phosphate (G3P), the key precursor for phospholipid synthesis. The protein is Glycerol-3-phosphate dehydrogenase [NAD(P)+] of Macrococcus caseolyticus (strain JCSC5402) (Macrococcoides caseolyticum).